Reading from the N-terminus, the 301-residue chain is Coiled-coil domain-containing protein 69-B (301 aa).

Residues 1–43 (MGSKTSKMCCPQLRKKKRQKAHKEGPSSQELNDLNAKSQGPNE) form a disordered region. Glycine 2 is lipidated: N-myristoyl glycine. The span at 26-41 (PSSQELNDLNAKSQGP) shows a compositional bias: polar residues. 2 coiled-coil regions span residues 42-167 (NELL…SILS) and 213-281 (KSTM…NLYR).

This sequence belongs to the CCDC69 family.

Its subcellular location is the cytoplasm. It is found in the cytoskeleton. The protein localises to the spindle. The protein resides in the midbody. Its function is as follows. May act as a scaffold to regulate the recruitment and assembly of spindle midzone components. The polypeptide is Coiled-coil domain-containing protein 69-B (ccdc69-b) (Xenopus laevis (African clawed frog)).